Reading from the N-terminus, the 41-residue chain is Bacteriocin (41 aa).

A disulfide bridge links C9 with C14.

Its subcellular location is the secreted. Functionally, bacteriocin active against S.aureus, S.typhi, B.thuringiensis, Klebsiella sp., E.coli KL16 and E.coli Gj137. This is Bacteriocin from Lactococcus sp.